The primary structure comprises 464 residues: Soluble pyridine nucleotide transhydrogenase (464 aa).

Residue 35–44 (DSRRQVGGNC) participates in FAD binding.

Belongs to the class-I pyridine nucleotide-disulfide oxidoreductase family. The cofactor is FAD.

It is found in the cytoplasm. It catalyses the reaction NAD(+) + NADPH = NADH + NADP(+). Functionally, conversion of NADPH, generated by peripheral catabolic pathways, to NADH, which can enter the respiratory chain for energy generation. In Pseudomonas syringae pv. syringae (strain B728a), this protein is Soluble pyridine nucleotide transhydrogenase.